Here is a 399-residue protein sequence, read N- to C-terminus: Zinc metalloproteinase nas-25 (399 aa).

A signal peptide spans 1–20; it reads MQIYLGITICLVAFLTVIDC. The Peptidase M12A domain maps to 41-237; the sequence is QVQRDLTYRW…DQINQYYQCY (197 aa). N-linked (GlcNAc...) asparagine glycans are attached at residues Asn-52 and Asn-61. 4 cysteine pairs are disulfide-bonded: Cys-82–Cys-236, Cys-106–Cys-126, Cys-240–Cys-260, and Cys-265–Cys-274. His-134 provides a ligand contact to Zn(2+). Glu-135 is an active-site residue. Zn(2+)-binding residues include His-138 and His-144. Positions 232–275 constitute an EGF-like domain; sequence QYYQCYDSCRNAGQLANCANGGIPNPNNCQVCNCPMGYGGDLCD. An N-linked (GlcNAc...) asparagine glycan is attached at Asn-371.

Requires Zn(2+) as cofactor. In terms of tissue distribution, expressed in pharyngeal muscles, pharyngeal-intestinal valve, rectal gland cells and arcade cells.

The protein resides in the secreted. In terms of biological role, metalloprotease. The polypeptide is Zinc metalloproteinase nas-25 (nas-25) (Caenorhabditis elegans).